Here is a 599-residue protein sequence, read N- to C-terminus: Elongation factor 4 (599 aa).

The 183-residue stretch at 5-187 (SHIRNFSIIA…ELVRLVPPPT (183 aa)) folds into the tr-type G domain. GTP-binding positions include 17 to 22 (DHGKST) and 134 to 137 (NKMD).

Belongs to the TRAFAC class translation factor GTPase superfamily. Classic translation factor GTPase family. LepA subfamily.

The protein resides in the cell inner membrane. It carries out the reaction GTP + H2O = GDP + phosphate + H(+). Its function is as follows. Required for accurate and efficient protein synthesis under certain stress conditions. May act as a fidelity factor of the translation reaction, by catalyzing a one-codon backward translocation of tRNAs on improperly translocated ribosomes. Back-translocation proceeds from a post-translocation (POST) complex to a pre-translocation (PRE) complex, thus giving elongation factor G a second chance to translocate the tRNAs correctly. Binds to ribosomes in a GTP-dependent manner. The chain is Elongation factor 4 from Cellvibrio japonicus (strain Ueda107) (Pseudomonas fluorescens subsp. cellulosa).